We begin with the raw amino-acid sequence, 367 residues long: DNA-directed RNA polymerase II subunit GRINL1A (367 aa).

Residues 15 to 40 (DLERRSLAELREMLKRQERLLRNEKF) adopt a coiled-coil conformation. The segment at 29–68 (KRQERLLRNEKFICKLPDKGKKIFDSFAKLKAAIAECEEV) is important for transcription repressor activity. Polar residues-rich tracts occupy residues 117–131 (SVDN…QNQG), 176–185 (RVSSQAEDTS), and 205–225 (GEQQ…SGTQ). 3 disordered regions span residues 117–185 (SVDN…EDTS), 203–225 (DQGE…SGTQ), and 254–281 (PFRQ…RRDK). The segment at 226–297 (KKPHYMEVLE…TAARLLPLHH (72 aa)) is interaction with Pol II. A Phosphoserine modification is found at Ser269. Residues 298–313 (MPTQLLSIEESLALQK) are important for transcription repressor activity. Positions 300–329 (TQLLSIEESLALQKQRKQKYEEMQAKLAAQ) form a coiled coil. The interval 314-339 (QRKQKYEEMQAKLAAQKLAERLNIKM) is interaction with Pol II. A disordered region spans residues 335–367 (LNIKMRSYNPEGESSGRYREVRDEDDDWSSDEF). Residues 357-367 (DEDDDWSSDEF) are compositionally biased toward acidic residues.

It belongs to the GRINL1 family. Component of the Pol II(G) complex, which contains the RNA polymerase II (Pol II) core complex subunits and POLR2M isoform 1. Pol II(G) appears to be an abundant form of Pol II. Dephosphorylated at Ser-269 by the PNUTS-PP1 complex, promoting RNA polymerase II transcription pause-release.

The protein resides in the nucleus. Appears to be a stable component of the Pol II(G) complex form of RNA polymerase II (Pol II). Pol II synthesizes mRNA precursors and many functional non-coding RNAs and is the central component of the basal RNA polymerase II transcription machinery. May play a role in the Mediator complex-dependent regulation of transcription activation. Acts as a negative regulator of transcriptional activation; this repression is relieved by the Mediator complex, which restores Pol II(G) activator-dependent transcription to a level equivalent to that of Pol II. The protein is DNA-directed RNA polymerase II subunit GRINL1A (POLR2M) of Pongo abelii (Sumatran orangutan).